The following is a 426-amino-acid chain: Nucleolar protein 12 (426 aa).

The segment at 26–128 (QSSGPVDTLE…SKRASRPDMK (103 aa)) is disordered. The segment covering 87 to 105 (LEEKYMQQVLKEDSDHESE) has biased composition (basic and acidic residues). RRM domains are found at residues 137-251 (RTVF…SVAH) and 259-339 (RSVF…RCRN). Residues 401-415 (KARSKTGRVTKRSQA) show a composition bias toward basic residues. Positions 401 to 426 (KARSKTGRVTKRSQAFKKAEANKKQK) are disordered. Residues 417 to 426 (KKAEANKKQK) show a composition bias toward basic and acidic residues.

Belongs to the RRM RBM34 family.

It localises to the nucleus. The protein resides in the nucleolus. Functionally, involved in pre-25S rRNA processing. The polypeptide is Nucleolar protein 12 (NOP12) (Eremothecium gossypii (strain ATCC 10895 / CBS 109.51 / FGSC 9923 / NRRL Y-1056) (Yeast)).